The sequence spans 98 residues: Large ribosomal subunit protein uL23 (98 aa).

The protein belongs to the universal ribosomal protein uL23 family. In terms of assembly, part of the 50S ribosomal subunit. Contacts protein L29, and trigger factor when it is bound to the ribosome.

Its function is as follows. One of the early assembly proteins it binds 23S rRNA. One of the proteins that surrounds the polypeptide exit tunnel on the outside of the ribosome. Forms the main docking site for trigger factor binding to the ribosome. This chain is Large ribosomal subunit protein uL23, found in Streptococcus pneumoniae serotype 19F (strain G54).